A 301-amino-acid polypeptide reads, in one-letter code: Possible hemolysin C (301 aa).

CBS domains are found at residues 80 to 142 and 145 to 202; these read MVPR…NGRL and LIRK…IDDE.

Belongs to the UPF0053 family. Hemolysin C subfamily.

This Rickettsia akari (strain Hartford) protein is Possible hemolysin C (tlyC).